A 287-amino-acid polypeptide reads, in one-letter code: 4-hydroxybenzoate octaprenyltransferase (287 aa).

6 helical membrane-spanning segments follow: residues 30 to 50, 89 to 109, 133 to 153, 158 to 178, 199 to 221, and 267 to 287; these read ALWI…FTVG, WEAV…ILPL, FFAI…PMAF, GHVP…SVAY, ALTF…LGIY, and NNWL…AGSF.

The protein belongs to the UbiA prenyltransferase family. Mg(2+) is required as a cofactor.

The protein resides in the cell inner membrane. The enzyme catalyses all-trans-octaprenyl diphosphate + 4-hydroxybenzoate = 4-hydroxy-3-(all-trans-octaprenyl)benzoate + diphosphate. It functions in the pathway cofactor biosynthesis; ubiquinone biosynthesis. Its function is as follows. Catalyzes the prenylation of para-hydroxybenzoate (PHB) with an all-trans polyprenyl group. Mediates the second step in the final reaction sequence of ubiquinone-8 (UQ-8) biosynthesis, which is the condensation of the polyisoprenoid side chain with PHB, generating the first membrane-bound Q intermediate 3-octaprenyl-4-hydroxybenzoate. The polypeptide is 4-hydroxybenzoate octaprenyltransferase (Paraburkholderia phytofirmans (strain DSM 17436 / LMG 22146 / PsJN) (Burkholderia phytofirmans)).